The sequence spans 34 residues: Photosystem II reaction center protein M (34 aa).

A helical transmembrane segment spans residues 5-25; the sequence is ILAFIATALFILIPTAFLLII.

Belongs to the PsbM family. In terms of assembly, PSII is composed of 1 copy each of membrane proteins PsbA, PsbB, PsbC, PsbD, PsbE, PsbF, PsbH, PsbI, PsbJ, PsbK, PsbL, PsbM, PsbT, PsbX, PsbY, PsbZ, Psb30/Ycf12, at least 3 peripheral proteins of the oxygen-evolving complex and a large number of cofactors. It forms dimeric complexes.

The protein localises to the plastid. The protein resides in the chloroplast thylakoid membrane. One of the components of the core complex of photosystem II (PSII). PSII is a light-driven water:plastoquinone oxidoreductase that uses light energy to abstract electrons from H(2)O, generating O(2) and a proton gradient subsequently used for ATP formation. It consists of a core antenna complex that captures photons, and an electron transfer chain that converts photonic excitation into a charge separation. This subunit is found at the monomer-monomer interface. The protein is Photosystem II reaction center protein M of Lolium perenne (Perennial ryegrass).